The following is a 180-amino-acid chain: ATP synthase subunit delta (180 aa).

It belongs to the ATPase delta chain family. As to quaternary structure, F-type ATPases have 2 components, F(1) - the catalytic core - and F(0) - the membrane proton channel. F(1) has five subunits: alpha(3), beta(3), gamma(1), delta(1), epsilon(1). F(0) has three main subunits: a(1), b(2) and c(10-14). The alpha and beta chains form an alternating ring which encloses part of the gamma chain. F(1) is attached to F(0) by a central stalk formed by the gamma and epsilon chains, while a peripheral stalk is formed by the delta and b chains.

The protein resides in the cell membrane. F(1)F(0) ATP synthase produces ATP from ADP in the presence of a proton or sodium gradient. F-type ATPases consist of two structural domains, F(1) containing the extramembraneous catalytic core and F(0) containing the membrane proton channel, linked together by a central stalk and a peripheral stalk. During catalysis, ATP synthesis in the catalytic domain of F(1) is coupled via a rotary mechanism of the central stalk subunits to proton translocation. In terms of biological role, this protein is part of the stalk that links CF(0) to CF(1). It either transmits conformational changes from CF(0) to CF(1) or is implicated in proton conduction. The sequence is that of ATP synthase subunit delta from Bacillus cereus (strain G9842).